Here is a 251-residue protein sequence, read N- to C-terminus: 1-(5-phosphoribosyl)-5-[(5-phosphoribosylamino)methylideneamino] imidazole-4-carboxamide isomerase (251 aa).

The active-site Proton acceptor is Asp8. The Proton donor role is filled by Asp131.

It belongs to the HisA/HisF family.

It is found in the cytoplasm. The catalysed reaction is 1-(5-phospho-beta-D-ribosyl)-5-[(5-phospho-beta-D-ribosylamino)methylideneamino]imidazole-4-carboxamide = 5-[(5-phospho-1-deoxy-D-ribulos-1-ylimino)methylamino]-1-(5-phospho-beta-D-ribosyl)imidazole-4-carboxamide. The protein operates within amino-acid biosynthesis; L-histidine biosynthesis; L-histidine from 5-phospho-alpha-D-ribose 1-diphosphate: step 4/9. The polypeptide is 1-(5-phosphoribosyl)-5-[(5-phosphoribosylamino)methylideneamino] imidazole-4-carboxamide isomerase (Burkholderia thailandensis (strain ATCC 700388 / DSM 13276 / CCUG 48851 / CIP 106301 / E264)).